The chain runs to 874 residues: MTSERYNARDSEPRWQAAWDEKAIFVSKNDDSRPKYYVLEMFPYPSGRIHIGHVRNYTLGDVLARFMRAKGFNVLHPMGWDAFGLPAENAAIERKVAPKAWTYDNIAAMKKQLRSIGLSLDWSREIATCDPSYYKHQQKMFLDFLRAGLAEREKRKVNWDPVDMTVLANEQVIDGKGWRSGAIVEQREMNQWVFKITKYSQELLSALDTLDRWPDKVRLMQRNWIGRSEGLLVRFALDQATTPAGESELKIFTTRPDTLFGAKFMAISADHPLATAAAAKDPKLAEFIAEIKKIGTAQEIIDTAEKQGFDTGIRAIHPFDPSWKLPVYVANFVLMEYGTGAIFGCPAHDQRDLDFVNKYNLGNTPVVCPEGQDPKSFVITDTAYDGDGRMINSRFLDGMTIEQAKDEVAKRLESELRGNAPVGERQVNFRLRDWGISRQRYWGCPIPVIHCPTCDVVPVPDADLPVKLPDDATFDKPGNALDHHPTWKHVTCPQCGGKAQRETDTMDTFVDSSWYFARFTDPWNENAPTTPAVANRMLPIDQYIGGVEHAILHLLYSRFFTRAMKATGHVALDEPFAGMFTQGMVVHETYQKADGSYVQPAEVKIELGGNGRRATLLTTGEDIQIGAIEKMSKSKKNTVDPDDIIETYGADVARWFMLSDSPPDRDVIWSDERVQGASRFVQRLWRLVNDSVELGKAAPAARPASFGADATALRKAAHGALDKVTTEIERLHFNVCLAHIREFTNAFSEVLQRPGQPAADLAWAIREASQILVQLFSPMMPHLAEECWQVLGQKGLVSEANWPQIERDLLVEDSVTLVVQVNGKKRGEVTVATAAQNPEIEAAVLALDAVKLALDGKPVRKVIIVPKRIVNVVG.

A 'HIGH' region motif is present at residues 43–53 (PYPSGRIHIGH). The 'KMSKS' region motif lies at 630 to 634 (KMSKS). Residue Lys633 coordinates ATP.

The protein belongs to the class-I aminoacyl-tRNA synthetase family.

It is found in the cytoplasm. It catalyses the reaction tRNA(Leu) + L-leucine + ATP = L-leucyl-tRNA(Leu) + AMP + diphosphate. This chain is Leucine--tRNA ligase, found in Bradyrhizobium diazoefficiens (strain JCM 10833 / BCRC 13528 / IAM 13628 / NBRC 14792 / USDA 110).